The primary structure comprises 475 residues: Aspartyl/glutamyl-tRNA(Asn/Gln) amidotransferase subunit B (475 aa).

Belongs to the GatB/GatE family. GatB subfamily. In terms of assembly, heterotrimer of A, B and C subunits.

The catalysed reaction is L-glutamyl-tRNA(Gln) + L-glutamine + ATP + H2O = L-glutaminyl-tRNA(Gln) + L-glutamate + ADP + phosphate + H(+). The enzyme catalyses L-aspartyl-tRNA(Asn) + L-glutamine + ATP + H2O = L-asparaginyl-tRNA(Asn) + L-glutamate + ADP + phosphate + 2 H(+). Its function is as follows. Allows the formation of correctly charged Asn-tRNA(Asn) or Gln-tRNA(Gln) through the transamidation of misacylated Asp-tRNA(Asn) or Glu-tRNA(Gln) in organisms which lack either or both of asparaginyl-tRNA or glutaminyl-tRNA synthetases. The reaction takes place in the presence of glutamine and ATP through an activated phospho-Asp-tRNA(Asn) or phospho-Glu-tRNA(Gln). This Staphylococcus epidermidis (strain ATCC 12228 / FDA PCI 1200) protein is Aspartyl/glutamyl-tRNA(Asn/Gln) amidotransferase subunit B.